The following is a 365-amino-acid chain: MPRPILATIHLAALSHNLARVRTAAPDAKVWAVVKANAYGHGIERVFDALRSADGFALLDLDEARRLRALDWRGPILLLEGCFEARDLELCSRLGLWHTIHCQEQIDMLAAHKTQLPHRVFLKMNTGMNRLGFTPERFRAAWIRLNALPQVDEISLMQHFPDADGPKGITAQLQAFDAVTHDLPGERTLSNSAAILRHTGALAGRSDWVRPGIVLYGSAPDFPEHSASDWELQPTMTLSSRIIGLQTLAAGDTVGYGSSFVAEGPMRIGVVACGYADGYPRHCPTGTPVLVNGVRTRMVGRVSMDMITVDLTPVPRAGMGSEVTLWGRASKGGAMLPIDEVARAAGTVGYELMCAVAPRVPVAVD.

Lys35 serves as the catalytic Proton acceptor; specific for D-alanine. Lys35 carries the N6-(pyridoxal phosphate)lysine modification. Arg130 serves as a coordination point for substrate. Tyr256 functions as the Proton acceptor; specific for L-alanine in the catalytic mechanism. Met304 provides a ligand contact to substrate.

The protein belongs to the alanine racemase family. The cofactor is pyridoxal 5'-phosphate.

It carries out the reaction L-alanine = D-alanine. It participates in amino-acid biosynthesis; D-alanine biosynthesis; D-alanine from L-alanine: step 1/1. Catalyzes the interconversion of L-alanine and D-alanine. May also act on other amino acids. This Polaromonas naphthalenivorans (strain CJ2) protein is Alanine racemase (alr).